The chain runs to 151 residues: Small ribosomal subunit protein uS13m (151 aa).

This sequence belongs to the universal ribosomal protein uS13 family. Component of the mitochondrial small ribosomal subunit (mt-SSU). Mature yeast 74S mitochondrial ribosomes consist of a small (37S) and a large (54S) subunit. The 37S small subunit contains a 15S ribosomal RNA (15S mt-rRNA) and at least 32 different proteins. The 54S large subunit contains a 21S rRNA (21S mt-rRNA) and at least 45 different proteins.

It localises to the mitochondrion. Its function is as follows. Component of the mitochondrial ribosome (mitoribosome), a dedicated translation machinery responsible for the synthesis of mitochondrial genome-encoded proteins, including at least some of the essential transmembrane subunits of the mitochondrial respiratory chain. The mitoribosomes are attached to the mitochondrial inner membrane and translation products are cotranslationally integrated into the membrane. This Schizosaccharomyces pombe (strain 972 / ATCC 24843) (Fission yeast) protein is Small ribosomal subunit protein uS13m (sws2).